A 142-amino-acid chain; its full sequence is Large-conductance mechanosensitive channel (142 aa).

The next 2 membrane-spanning stretches (helical) occupy residues 14–34 (VMDLAVGVIIGAAFSKIVDSV) and 82–102 (GNFITVFINFLILAWIIFLLI).

Belongs to the MscL family. Homopentamer.

The protein localises to the cell inner membrane. In terms of biological role, channel that opens in response to stretch forces in the membrane lipid bilayer. May participate in the regulation of osmotic pressure changes within the cell. In Sinorhizobium medicae (strain WSM419) (Ensifer medicae), this protein is Large-conductance mechanosensitive channel.